A 397-amino-acid polypeptide reads, in one-letter code: Serpin B10 (397 aa).

The Nuclear localization signal motif lies at 74–77 (KKRK).

The protein belongs to the serpin family. Ov-serpin subfamily.

The protein localises to the nucleus. The protein resides in the cytoplasm. Protease inhibitor that may play a role in the regulation of protease activities during hematopoiesis and apoptosis induced by TNF. May regulate protease activities in the cytoplasm and in the nucleus. This is Serpin B10 (SERPINB10) from Plecturocebus moloch (Dusky titi monkey).